The sequence spans 459 residues: Adenylosuccinate synthetase isozyme 1 C (459 aa).

Residues 1-31 are disordered; that stretch reads MSFSWSAKDHKSYTNPPSNPTQGLKRPRNDT. A compositionally biased stretch (polar residues) spans 13–22; it reads YTNPPSNPTQ. Residues 44–50 and 72–74 each bind GTP; these read GDEGKGK and GHT. Aspartate 45 (proton acceptor) is an active-site residue. Mg(2+) is bound by residues aspartate 45 and glycine 72. Aspartate 45 lines the substrate pocket. Residues 45-48, 70-73, threonine 165, arginine 179, asparagine 258, threonine 273, and arginine 337 contribute to the IMP site; these read DEGK and NAGH. The active-site Proton donor is histidine 73. 333–339 provides a ligand contact to substrate; it reads VTTGRKR. GTP-binding positions include arginine 339, 365-367, and 447-450; these read KLD and GVGK.

Belongs to the adenylosuccinate synthetase family. In terms of assembly, homodimer. It depends on Mg(2+) as a cofactor.

It localises to the cytoplasm. The catalysed reaction is IMP + L-aspartate + GTP = N(6)-(1,2-dicarboxyethyl)-AMP + GDP + phosphate + 2 H(+). Its pathway is purine metabolism; AMP biosynthesis via de novo pathway; AMP from IMP: step 1/2. Component of the purine nucleotide cycle (PNC), which interconverts IMP and AMP to regulate the nucleotide levels in various tissues, and which contributes to glycolysis and ammoniagenesis. Catalyzes the first committed step in the biosynthesis of AMP from IMP. The chain is Adenylosuccinate synthetase isozyme 1 C (adss1c) from Salmo salar (Atlantic salmon).